Reading from the N-terminus, the 303-residue chain is Dihydroorotate dehydrogenase B (NAD(+)), catalytic subunit (303 aa).

FMN contacts are provided by residues S21 and 45 to 46 (KG). Substrate contacts are provided by residues K45 and 69–73 (NAVGL). FMN-binding residues include N99 and N127. N127 contacts substrate. Catalysis depends on C130, which acts as the Nucleophile. FMN-binding residues include K165 and I191. Residue 192 to 193 (NT) coordinates substrate. FMN contacts are provided by residues G217, 243 to 244 (GG), and 265 to 266 (GT).

It belongs to the dihydroorotate dehydrogenase family. Type 1 subfamily. Heterotetramer of 2 PyrK and 2 PyrD type B subunits. FMN serves as cofactor.

It is found in the cytoplasm. It catalyses the reaction (S)-dihydroorotate + NAD(+) = orotate + NADH + H(+). It participates in pyrimidine metabolism; UMP biosynthesis via de novo pathway; orotate from (S)-dihydroorotate (NAD(+) route): step 1/1. Catalyzes the conversion of dihydroorotate to orotate with NAD(+) as electron acceptor. The sequence is that of Dihydroorotate dehydrogenase B (NAD(+)), catalytic subunit (pyrD) from Bacteroides fragilis (strain ATCC 25285 / DSM 2151 / CCUG 4856 / JCM 11019 / LMG 10263 / NCTC 9343 / Onslow / VPI 2553 / EN-2).